Reading from the N-terminus, the 394-residue chain is GDSL esterase/lipase At2g27360 (394 aa).

The N-terminal stretch at 1–24 (MASQDCHMLLSFFISTFLITVVTS) is a signal peptide. The active-site Nucleophile is Ser-40. Asn-136 and Asn-319 each carry an N-linked (GlcNAc...) asparagine glycan. Catalysis depends on residues Asp-344 and His-347. N-linked (GlcNAc...) asparagine glycosylation is found at Asn-371 and Asn-382.

It belongs to the 'GDSL' lipolytic enzyme family.

It localises to the secreted. The protein is GDSL esterase/lipase At2g27360 of Arabidopsis thaliana (Mouse-ear cress).